A 103-amino-acid chain; its full sequence is Large ribosomal subunit protein bL21 (103 aa).

The protein belongs to the bacterial ribosomal protein bL21 family. Part of the 50S ribosomal subunit. Contacts protein L20.

Its function is as follows. This protein binds to 23S rRNA in the presence of protein L20. This chain is Large ribosomal subunit protein bL21, found in Salmonella paratyphi A (strain ATCC 9150 / SARB42).